The chain runs to 326 residues: Meiotically up-regulated gene 113 protein (326 aa).

It is found in the cytoplasm. Its function is as follows. Has a role in meiosis. The chain is Meiotically up-regulated gene 113 protein (mug113) from Schizosaccharomyces pombe (strain 972 / ATCC 24843) (Fission yeast).